The primary structure comprises 464 residues: ATP synthase subunit beta (464 aa).

150–157 (GGAGVGKT) contributes to the ATP binding site.

The protein belongs to the ATPase alpha/beta chains family. As to quaternary structure, F-type ATPases have 2 components, CF(1) - the catalytic core - and CF(0) - the membrane proton channel. CF(1) has five subunits: alpha(3), beta(3), gamma(1), delta(1), epsilon(1). CF(0) has three main subunits: a(1), b(2) and c(9-12). The alpha and beta chains form an alternating ring which encloses part of the gamma chain. CF(1) is attached to CF(0) by a central stalk formed by the gamma and epsilon chains, while a peripheral stalk is formed by the delta and b chains.

Its subcellular location is the cell membrane. It carries out the reaction ATP + H2O + 4 H(+)(in) = ADP + phosphate + 5 H(+)(out). Produces ATP from ADP in the presence of a proton gradient across the membrane. The catalytic sites are hosted primarily by the beta subunits. The protein is ATP synthase subunit beta of Dehalococcoides mccartyi (strain ATCC BAA-2266 / KCTC 15142 / 195) (Dehalococcoides ethenogenes (strain 195)).